A 71-amino-acid chain; its full sequence is Small, acid-soluble spore protein I (71 aa).

It belongs to the SspI family.

Its subcellular location is the spore core. The chain is Small, acid-soluble spore protein I from Bacillus velezensis (strain DSM 23117 / BGSC 10A6 / LMG 26770 / FZB42) (Bacillus amyloliquefaciens subsp. plantarum).